The sequence spans 1077 residues: ATP-dependent helicase/deoxyribonuclease subunit B (1077 aa).

The protein belongs to the helicase family. AddB/RexB type 2 subfamily. As to quaternary structure, heterodimer of AddA and RexB. It depends on Mg(2+) as a cofactor.

The heterodimer acts as both an ATP-dependent DNA helicase and an ATP-dependent, dual-direction single-stranded exonuclease. Recognizes the chi site generating a DNA molecule suitable for the initiation of homologous recombination. This subunit has 5' -&gt; 3' nuclease activity but not helicase activity. This chain is ATP-dependent helicase/deoxyribonuclease subunit B, found in Streptococcus agalactiae serotype III (strain NEM316).